The chain runs to 207 residues: Ribosomal RNA small subunit methyltransferase G (207 aa).

Residues G74, L79, V125–E126, and R140 contribute to the S-adenosyl-L-methionine site.

Belongs to the methyltransferase superfamily. RNA methyltransferase RsmG family.

The protein resides in the cytoplasm. The catalysed reaction is guanosine(527) in 16S rRNA + S-adenosyl-L-methionine = N(7)-methylguanosine(527) in 16S rRNA + S-adenosyl-L-homocysteine. In terms of biological role, specifically methylates the N7 position of guanine in position 527 of 16S rRNA. This Shewanella loihica (strain ATCC BAA-1088 / PV-4) protein is Ribosomal RNA small subunit methyltransferase G.